We begin with the raw amino-acid sequence, 205 residues long: Ribonuclease HII (205 aa).

In terms of domain architecture, RNase H type-2 spans 14–205 (ERICGIDEAG…SFKVRRLNEA (192 aa)). Residues D20, E21, and D117 each contribute to the a divalent metal cation site.

It belongs to the RNase HII family. Requires Mn(2+) as cofactor. Mg(2+) serves as cofactor.

The protein localises to the cytoplasm. The catalysed reaction is Endonucleolytic cleavage to 5'-phosphomonoester.. Functionally, endonuclease that specifically degrades the RNA of RNA-DNA hybrids. This is Ribonuclease HII from Chlorobium phaeovibrioides (strain DSM 265 / 1930) (Prosthecochloris vibrioformis (strain DSM 265)).